Consider the following 446-residue polypeptide: Histidine--tRNA ligase (446 aa).

It belongs to the class-II aminoacyl-tRNA synthetase family. Homodimer.

The protein localises to the cytoplasm. It catalyses the reaction tRNA(His) + L-histidine + ATP = L-histidyl-tRNA(His) + AMP + diphosphate + H(+). The protein is Histidine--tRNA ligase of Burkholderia vietnamiensis (strain G4 / LMG 22486) (Burkholderia cepacia (strain R1808)).